The sequence spans 446 residues: Gamma-glutamyl phosphate reductase (446 aa).

Belongs to the gamma-glutamyl phosphate reductase family.

It localises to the cytoplasm. It carries out the reaction L-glutamate 5-semialdehyde + phosphate + NADP(+) = L-glutamyl 5-phosphate + NADPH + H(+). Its pathway is amino-acid biosynthesis; L-proline biosynthesis; L-glutamate 5-semialdehyde from L-glutamate: step 2/2. Its function is as follows. Catalyzes the NADPH-dependent reduction of L-glutamate 5-phosphate into L-glutamate 5-semialdehyde and phosphate. The product spontaneously undergoes cyclization to form 1-pyrroline-5-carboxylate. The chain is Gamma-glutamyl phosphate reductase from Sulfurihydrogenibium sp. (strain YO3AOP1).